A 208-amino-acid chain; its full sequence is 3-demethoxyubiquinol 3-hydroxylase (208 aa).

Residues glutamate 57, glutamate 87, histidine 90, glutamate 139, glutamate 171, and histidine 174 each contribute to the Fe cation site.

Belongs to the COQ7 family. The cofactor is Fe cation.

It is found in the cell membrane. The catalysed reaction is a 5-methoxy-2-methyl-3-(all-trans-polyprenyl)benzene-1,4-diol + AH2 + O2 = a 3-demethylubiquinol + A + H2O. It functions in the pathway cofactor biosynthesis; ubiquinone biosynthesis. Its function is as follows. Catalyzes the hydroxylation of 2-nonaprenyl-3-methyl-6-methoxy-1,4-benzoquinol during ubiquinone biosynthesis. The polypeptide is 3-demethoxyubiquinol 3-hydroxylase (Verminephrobacter eiseniae (strain EF01-2)).